Consider the following 101-residue polypeptide: Small ribosomal subunit protein uS14 (101 aa).

It belongs to the universal ribosomal protein uS14 family. Part of the 30S ribosomal subunit. Contacts proteins S3 and S10.

In terms of biological role, binds 16S rRNA, required for the assembly of 30S particles and may also be responsible for determining the conformation of the 16S rRNA at the A site. This Dechloromonas aromatica (strain RCB) protein is Small ribosomal subunit protein uS14.